Here is a 125-residue protein sequence, read N- to C-terminus: N-alpha-acetyltransferase 38, NatC auxiliary subunit (125 aa).

The segment at Met1–Arg42 is disordered. Ala2 carries the post-translational modification N-acetylalanine. The span at Ser18–Asp28 shows a compositional bias: low complexity. Phosphoserine is present on residues Ser22, Ser25, and Ser29. In terms of domain architecture, Sm spans Arg40–Ser118.

The protein belongs to the snRNP Sm proteins family. Component of the N-terminal acetyltransferase C (NatC) complex, which is composed of NAA35, NAA38 and NAA30.

The protein resides in the cytoplasm. The protein localises to the nucleus. Its function is as follows. Auxillary component of the N-terminal acetyltransferase C (NatC) complex which catalyzes acetylation of N-terminal methionine residues. N-terminal acetylation protects proteins from ubiquitination and degradation by the N-end rule pathway. In Mus musculus (Mouse), this protein is N-alpha-acetyltransferase 38, NatC auxiliary subunit (Naa38).